A 274-amino-acid chain; its full sequence is Actin-binding protein Smlt3054 (274 aa).

2 ANK repeats span residues Ser-192–Ala-221 and His-225–Gln-254. The disordered stretch occupies residues Asn-251–Leu-274.

As to quaternary structure, exists as a dimer as well as a higher order oligomer.

It is found in the secreted. The protein resides in the periplasm. In terms of biological role, directly binds F-actin, which results in thickened and distorted F-actin fibers, and affects cellular F-actin localization. Thus, may be a host effector whose function is to disrupt host actin cytoskeletal structure, which may enhance invasion. The polypeptide is Actin-binding protein Smlt3054 (Stenotrophomonas maltophilia (strain K279a)).